Here is a 323-residue protein sequence, read N- to C-terminus: Fructose-1,6-bisphosphatase class 1 (323 aa).

Positions 88, 107, 109, and 110 each coordinate Mg(2+). Substrate contacts are provided by residues 110 to 113 (DGSS) and Asn200. Glu272 provides a ligand contact to Mg(2+).

Belongs to the FBPase class 1 family. Homotetramer. The cofactor is Mg(2+).

It localises to the cytoplasm. It catalyses the reaction beta-D-fructose 1,6-bisphosphate + H2O = beta-D-fructose 6-phosphate + phosphate. It functions in the pathway carbohydrate biosynthesis; gluconeogenesis. In Acinetobacter baumannii (strain ACICU), this protein is Fructose-1,6-bisphosphatase class 1.